Reading from the N-terminus, the 940-residue chain is Lon protease homolog 1, mitochondrial (940 aa).

The transit peptide at 1 to 61 (MLKLFTSSAS…AFFCSEPTNG (61 aa)) directs the protein to the mitochondrion. A disordered region spans residues 70–90 (KAVESDSEVSDSKSSSAIVPT). Position 74 is a phosphoserine (S74). Residues 100 to 309 (VLALPVPHRP…LTLELMKKEM (210 aa)) enclose the Lon N-terminal domain. Position 464–471 (464–471 (GPPGVGKT)) interacts with ATP. The Lon proteolytic domain maps to 751 to 935 (QTPVGVVMGL…GKIFELAFGY (185 aa)). Catalysis depends on residues S841 and K884.

The protein belongs to the peptidase S16 family. Homohexamer or homoheptamer. Organized in a ring with a central cavity.

The protein localises to the mitochondrion matrix. It catalyses the reaction Hydrolysis of proteins in presence of ATP.. ATP-dependent serine protease that mediates the selective degradation of misfolded, unassembled or oxidatively damaged polypeptides as well as certain short-lived regulatory proteins in the mitochondrial matrix. May also have a chaperone function in the assembly of inner membrane protein complexes. Participates in the regulation of mitochondrial gene expression and in the maintenance of the integrity of the mitochondrial genome. Binds to mitochondrial DNA in a site-specific manner. This chain is Lon protease homolog 1, mitochondrial (LON1), found in Arabidopsis thaliana (Mouse-ear cress).